The chain runs to 1638 residues: Chromatin-remodeling ATPase INO80 (1638 aa).

The interval 41–93 is disordered; the sequence is SLRKPLSSDEETDDEHVVKREHDVQDSDDSSTVGVVRMKQSSKRKSRLLASKE. Residues S47 and S48 each carry the phosphoserine modification. T52 bears the Phosphothreonine mark. The span at 55–65 shows a compositional bias: basic and acidic residues; it reads EHVVKREHDVQ. Residues S67 and S70 each carry the phosphoserine modification. A coiled-coil region spans residues 136–161; that stretch reads VQQLLREHVREQRQRKNYYKKAANAQ. Residues 201-259 are disordered; it reads RLAEAQAGPKPPKQRRRGRKKRDNMGSPESGEVPPSELGKYTFGDTLPNNEDDDEDGGE. Positions 212-222 are enriched in basic residues; that stretch reads PKQRRRGRKKR. Phosphoserine is present on residues S227 and S230. Over residues 250–259 the composition is skewed to acidic residues; sequence NEDDDEDGGE. Residues 313-438 form the DBINO domain; it reads IWQIMSKKES…AHFMSKKLGQ (126 aa). The disordered stretch occupies residues 499–528; the sequence is KEKEEEEQAQESVEDIKPEPRPEMKDLPQP. Acidic residues predominate over residues 502–511; sequence EEEEQAQESV. Residues 512–526 are compositionally biased toward basic and acidic residues; the sequence is EDIKPEPRPEMKDLP. Residues 547 to 718 form the Helicase ATP-binding domain; it reads ANIYDQGISG…WALLHFIMPT (172 aa). 560–567 provides a ligand contact to ATP; it reads DEMGLGKT. Positions 1160-1315 constitute a Helicase C-terminal domain; it reads VLDNLLTRLK…GGNFKPDTLK (156 aa). Disordered regions lie at residues 1335 to 1364 and 1463 to 1638; these read QEAK…DVNM and FLDD…VGPE. The segment covering 1338–1350 has biased composition (polar residues); sequence KLQSSSPIPAATQ. Residues 1473-1495 show a composition bias toward basic residues; it reads MRRRHHPRGTRRGRPRGSTRRGG. Composition is skewed to low complexity over residues 1505–1534 and 1618–1627; these read TPTQ…GTSS and SPATSRAPSP.

Belongs to the SNF2/RAD54 helicase family. In terms of assembly, component of the chromatin remodeling Ino80 complex.

The protein resides in the nucleus. It catalyses the reaction ATP + H2O = ADP + phosphate + H(+). In terms of biological role, ATPase component of the chromatin remodeling INO80 complex which is involved in transcriptional regulation, DNA replication and DNA repair. Binds DNA. As part of the INO80 complex, remodels chromatin by shifting nucleosomes. The sequence is that of Chromatin-remodeling ATPase INO80 from Drosophila melanogaster (Fruit fly).